Reading from the N-terminus, the 1243-residue chain is ATP-dependent helicase/nuclease subunit A (1243 aa).

The UvrD-like helicase ATP-binding domain occupies 2–475 (VNWTKEQEEA…IDLARNFRSR (474 aa)). Residue 23–30 (AAAGSGKT) participates in ATP binding. In terms of domain architecture, UvrD-like helicase C-terminal spans 502–803 (AAELIYGNKM…RIMTIHKSKG (302 aa)).

Belongs to the helicase family. AddA subfamily. In terms of assembly, heterodimer of AddA and AddB/RexB. It depends on Mg(2+) as a cofactor.

The enzyme catalyses Couples ATP hydrolysis with the unwinding of duplex DNA by translocating in the 3'-5' direction.. It catalyses the reaction ATP + H2O = ADP + phosphate + H(+). In terms of biological role, the heterodimer acts as both an ATP-dependent DNA helicase and an ATP-dependent, dual-direction single-stranded exonuclease. Recognizes the chi site generating a DNA molecule suitable for the initiation of homologous recombination. The AddA nuclease domain is required for chi fragment generation; this subunit has the helicase and 3' -&gt; 5' nuclease activities. This chain is ATP-dependent helicase/nuclease subunit A, found in Oceanobacillus iheyensis (strain DSM 14371 / CIP 107618 / JCM 11309 / KCTC 3954 / HTE831).